Reading from the N-terminus, the 114-residue chain is Nucleoid-associated protein Amet_4780 (114 aa).

Residues 23–42 are disordered; sequence QKMQKDMEKTQAALEEKEVE. Over residues 25-42 the composition is skewed to basic and acidic residues; it reads MQKDMEKTQAALEEKEVE.

Belongs to the YbaB/EbfC family. In terms of assembly, homodimer.

It is found in the cytoplasm. Its subcellular location is the nucleoid. Its function is as follows. Binds to DNA and alters its conformation. May be involved in regulation of gene expression, nucleoid organization and DNA protection. The polypeptide is Nucleoid-associated protein Amet_4780 (Alkaliphilus metalliredigens (strain QYMF)).